We begin with the raw amino-acid sequence, 134 residues long: Inner membrane protein YqjE (134 aa).

Over 1–55 (MADTHHAQGPGKSVLGIGQRIVSIMVEMVETRLRLAVVELEEEKANLFQLLLMLG) the chain is Cytoplasmic. A helical membrane pass occupies residues 56–76 (LTMLFAAFGLMSLMVLIIWAV). Over 77–83 (DPQYRLN) the chain is Periplasmic. The helical transmembrane segment at 84-104 (AMIATTVVLLLLALIGGIWTL) threads the bilayer. The Cytoplasmic portion of the chain corresponds to 105–134 (RKSRKSTLLRHTRHELANDRQLLEEESREQ).

The protein localises to the cell inner membrane. This is Inner membrane protein YqjE (yqjE) from Escherichia coli O157:H7.